The chain runs to 258 residues: Imidazole glycerol phosphate synthase subunit HisF (258 aa).

Active-site residues include Asp-11 and Asp-130.

It belongs to the HisA/HisF family. Heterodimer of HisH and HisF.

The protein resides in the cytoplasm. The catalysed reaction is 5-[(5-phospho-1-deoxy-D-ribulos-1-ylimino)methylamino]-1-(5-phospho-beta-D-ribosyl)imidazole-4-carboxamide + L-glutamine = D-erythro-1-(imidazol-4-yl)glycerol 3-phosphate + 5-amino-1-(5-phospho-beta-D-ribosyl)imidazole-4-carboxamide + L-glutamate + H(+). It functions in the pathway amino-acid biosynthesis; L-histidine biosynthesis; L-histidine from 5-phospho-alpha-D-ribose 1-diphosphate: step 5/9. IGPS catalyzes the conversion of PRFAR and glutamine to IGP, AICAR and glutamate. The HisF subunit catalyzes the cyclization activity that produces IGP and AICAR from PRFAR using the ammonia provided by the HisH subunit. The protein is Imidazole glycerol phosphate synthase subunit HisF of Baumannia cicadellinicola subsp. Homalodisca coagulata.